Reading from the N-terminus, the 318-residue chain is Ribosomal RNA small subunit methyltransferase H (318 aa).

S-adenosyl-L-methionine contacts are provided by residues 34–36 (GGH), Asp53, Phe82, Asp103, and Gln110.

This sequence belongs to the methyltransferase superfamily. RsmH family.

Its subcellular location is the cytoplasm. The enzyme catalyses cytidine(1402) in 16S rRNA + S-adenosyl-L-methionine = N(4)-methylcytidine(1402) in 16S rRNA + S-adenosyl-L-homocysteine + H(+). Specifically methylates the N4 position of cytidine in position 1402 (C1402) of 16S rRNA. This Limosilactobacillus reuteri (strain DSM 20016) (Lactobacillus reuteri) protein is Ribosomal RNA small subunit methyltransferase H.